The following is a 56-amino-acid chain: Photosystem II reaction center X protein (56 aa).

A helical transmembrane segment spans residues 27 to 47 (IGSFLAAGALIVAPAAAALIW).

It belongs to the PsbX family. Type 2 subfamily. PSII consists of a core antenna complex that captures photons, and an electron transfer chain that converts photonic excitation into a charge separation. PSII forms dimeric complexes.

The protein resides in the cellular thylakoid membrane. In terms of biological role, involved in the binding and/or turnover of quinones at the Q(B) site of Photosystem II. In Prochlorococcus marinus (strain NATL2A), this protein is Photosystem II reaction center X protein.